The chain runs to 426 residues: Glutamate-1-semialdehyde 2,1-aminomutase (426 aa).

K265 carries the N6-(pyridoxal phosphate)lysine modification.

This sequence belongs to the class-III pyridoxal-phosphate-dependent aminotransferase family. HemL subfamily. Homodimer. Pyridoxal 5'-phosphate serves as cofactor.

It is found in the cytoplasm. It catalyses the reaction (S)-4-amino-5-oxopentanoate = 5-aminolevulinate. The protein operates within porphyrin-containing compound metabolism; protoporphyrin-IX biosynthesis; 5-aminolevulinate from L-glutamyl-tRNA(Glu): step 2/2. This Escherichia fergusonii (strain ATCC 35469 / DSM 13698 / CCUG 18766 / IAM 14443 / JCM 21226 / LMG 7866 / NBRC 102419 / NCTC 12128 / CDC 0568-73) protein is Glutamate-1-semialdehyde 2,1-aminomutase.